A 382-amino-acid chain; its full sequence is Galactokinase (382 aa).

Residue 34 to 37 (EHTD) coordinates substrate. Residue 124–130 (GAGLSSS) coordinates ATP. Serine 130 and glutamate 162 together coordinate Mg(2+). Aspartate 174 functions as the Proton acceptor in the catalytic mechanism. Tyrosine 223 serves as a coordination point for substrate.

Belongs to the GHMP kinase family. GalK subfamily.

Its subcellular location is the cytoplasm. The enzyme catalyses alpha-D-galactose + ATP = alpha-D-galactose 1-phosphate + ADP + H(+). It functions in the pathway carbohydrate metabolism; galactose metabolism. In terms of biological role, catalyzes the transfer of the gamma-phosphate of ATP to D-galactose to form alpha-D-galactose-1-phosphate (Gal-1-P). The polypeptide is Galactokinase (Shigella boydii serotype 4 (strain Sb227)).